The following is a 143-amino-acid chain: Transcriptional regulator MraZ (143 aa).

2 consecutive SpoVT-AbrB domains span residues 5 to 47 (EYLH…PLDE) and 76 to 119 (ATEC…SQAL).

This sequence belongs to the MraZ family. As to quaternary structure, forms oligomers.

Its subcellular location is the cytoplasm. The protein resides in the nucleoid. The protein is Transcriptional regulator MraZ of Desulfitobacterium hafniense (strain DSM 10664 / DCB-2).